Consider the following 500-residue polypeptide: Neuronal acetylcholine receptor subunit beta-2 (500 aa).

A signal peptide spans 1-24 (MAGHSNSMALFSFSLLWLCSGVLG). Residues 25–237 (TDTEERLVEH…IIRRKPLFYT (213 aa)) are Extracellular-facing. Residues Asn50 and Asn167 are each glycosylated (N-linked (GlcNAc...) asparagine). A disulfide bridge connects residues Cys154 and Cys168. A helical membrane pass occupies residues 238 to 258 (INLIIPCVLITSLAILVFYLP). Residues 259-266 (SDCGEKMT) are Cytoplasmic-facing. Residues 267–287 (LCISVLLALTVFLLLISKIVP) form a helical membrane-spanning segment. The Extracellular segment spans residues 288–299 (PTSLDVPLVGKY). Residues 300–320 (LMFTMVLVTFSIVTSVCVLNV) form a helical membrane-spanning segment. Topologically, residues 321 to 458 (HHRSPTTHTM…WKYVAMVIDR (138 aa)) are cytoplasmic. A helical membrane pass occupies residues 459–479 (LFLWIFVFVCVFGTVGMFLQP).

It belongs to the ligand-gated ion channel (TC 1.A.9) family. Acetylcholine receptor (TC 1.A.9.1) subfamily. Beta-2/CHRNB2 sub-subfamily. In terms of assembly, neuronal AChR is a heteropentamer composed of two different types of subunits: alpha and beta. CHRNB2/Beta-2 subunit can be combined to CHRNA2/alpha-2, CHRNA3/alpha-3 or CHRNA4/alpha-4, CHRNA5/alpha-5, CHRNA6/alpha-6 and CHRNB3/beta-3 to give rise to functional receptors. CHRNA2:CHRNB2 and CHRNA4:CHRNB2 nAChR complexes exist in two subtypes: LS (low agonist sensitivity) with a (CHRNA2/4)3:(CHRNB2)2 and HS (high agonist sensitivity) with a (CHRNA2/4)2:(CHRNB2)3 stoichiometry; the subtypes differ in their subunit binding interfaces which are involved in ligand binding. Cells produce predominantly an (CHRNA4)3:(CHRNB2)2 nAChR. The stoichiometric form (CHRNA4)2:(CHRNB2)3 expression is selectively up-regulated by nicotine and has lower single channel conductance and calcium permeability. Also part of the stoichiometric forms: (CHRNA4:CHRNB2)2:CHRNB3 or (CHRNA6:CHRNB2)2:CHRNB3. Can form heteropentamers with CHRNA7, mainly found in basal forebrain cholinergic neurons. Interacts with RIC3; which is required for proper folding and assembly. Interacts with LYPD6. Expressed in most regions of the CNS.

The protein localises to the synaptic cell membrane. It is found in the cell membrane. It carries out the reaction Ca(2+)(in) = Ca(2+)(out). It catalyses the reaction K(+)(in) = K(+)(out). The enzyme catalyses Na(+)(in) = Na(+)(out). Its activity is regulated as follows. Activated by a myriad of ligands such as acetylcholine, cytisine, nicotine, choline and epibatidine. Channel potentiation by calcium is stoichiometry-selective, CHRNA4:CHRNB2 nACh receptor is achieved by calcium association with topographically distinct sites framed by anionic residues within the CHRNA4 subunit and between the CHRNA4 and CHRNB2 subunits. Oligomeric amyloid-beta protein 42 activates specifially CHRNA7:CHRNB2 nAchRs. nAChR activity is inhibited by the antagonist alpha-conotoxins BuIA, PnIA, PnIC, GID and MII, small disulfide-constrained peptides from cone snails. Component of neuronal acetylcholine receptors (nAChRs) that function as pentameric, ligand-gated cation channels with high calcium permeability among other activities. nAChRs are excitatory neurotrasnmitter receptors formed by a collection of nAChR subunits known to mediate synaptic transmission in the nervous system and the neuromuscular junction. Each nAchR subunit confers differential attributes to channel properties, including activation, deactivation and desensitization kinetics, pH sensitivity, cation permeability, and binding to allosteric modulators. CHRNB2 forms heteropentameric neuronal acetylcholine receptors with CHRNA2, CHRNA3, CHRNA4 and CHRNA6, as well as CHRNA5 and CHRNB3 as accesory subunits. Found in two major stoichiometric forms,(CHRNA4)3:(CHRNB2)2 and (CHRNA4)2:(CHRNB2)3, the two stoichiometric forms differ in their unitary conductance, calcium permeability, ACh sensitivity and potentiation by divalent cation. Heteropentameric channels with CHRNA6 and CHRNA4 exhibit high sensitivity to ACh and nicotine and are predominantly expressed in only a few brain areas, including dopaminergic neurons, norepirephrine neurons and cells of the visual system. nAChrs containing CHRNA6 subunits mediate endogenous cholinergic modulation of dopamine and gamma-aminobutyric acid (GABA) release in response to nicotine at nerve terminals. Also forms functional nAChRs with other subunits such as CHRNA7:CHRNB2, mainly expressed in basal forebrain cholinergic neurons. The sequence is that of Neuronal acetylcholine receptor subunit beta-2 (Chrnb2) from Rattus norvegicus (Rat).